A 411-amino-acid chain; its full sequence is Probable tRNA pseudouridine synthase D (411 aa).

Residue D79 is the Nucleophile of the active site. The TRUD domain maps to G150–A369.

This sequence belongs to the pseudouridine synthase TruD family.

It carries out the reaction uridine(13) in tRNA = pseudouridine(13) in tRNA. In terms of biological role, could be responsible for synthesis of pseudouridine from uracil-13 in transfer RNAs. This is Probable tRNA pseudouridine synthase D from Thermoplasma acidophilum (strain ATCC 25905 / DSM 1728 / JCM 9062 / NBRC 15155 / AMRC-C165).